We begin with the raw amino-acid sequence, 78 residues long: Protein SlyX homolog (78 aa).

This sequence belongs to the SlyX family.

This is Protein SlyX homolog from Xanthomonas axonopodis pv. citri (strain 306).